We begin with the raw amino-acid sequence, 875 residues long: Phosphoenolpyruvate carboxylase (875 aa).

Active-site residues include His137 and Lys542.

This sequence belongs to the PEPCase type 1 family. Mg(2+) is required as a cofactor.

The catalysed reaction is oxaloacetate + phosphate = phosphoenolpyruvate + hydrogencarbonate. In terms of biological role, forms oxaloacetate, a four-carbon dicarboxylic acid source for the tricarboxylic acid cycle. The chain is Phosphoenolpyruvate carboxylase from Pseudomonas putida (strain ATCC 700007 / DSM 6899 / JCM 31910 / BCRC 17059 / LMG 24140 / F1).